Reading from the N-terminus, the 263-residue chain is 7beta-hydroxysteroid dehydrogenase (263 aa).

Residues 17-21 (TEGVG), 40-41 (RR), and 66-67 (DF) contribute to the NADP(+) site. Tyrosine 156 serves as the catalytic Proton acceptor. Serine 240 contacts NADP(+).

This sequence belongs to the short-chain dehydrogenases/reductases (SDR) family. In terms of assembly, homodimer.

It catalyses the reaction a 7beta-hydroxysteroid + NADP(+) = a 7-oxosteroid + NADPH + H(+). It carries out the reaction 7-oxolithocholate + NADPH + H(+) = ursodeoxycholate + NADP(+). The catalysed reaction is 7beta-hydroxy-3,12-dioxo-5beta-cholan-24-oate + NADP(+) = dehydrocholate + NADPH + H(+). The enzyme catalyses ursocholate + NADP(+) = 3alpha,12alpha-dihydroxy-7-oxo-5beta-cholanate + NADPH + H(+). Its function is as follows. 7beta-hydroxysteroid dehydrogenase that catalyzes the reduction of the 7-oxo group of 7-oxo-lithocholate (7-oxo-LCA), to yield ursodeoxycholate (UDCA). As C.aerofaciens is an intestinal bacterium, this enzyme probably contributes to the formation of UDCA in the human colon. UDCA is regarded as a chemopreventive beneficial secondary bile acid due to its low hydrophobicity; it protects hepatocytes and bile duct epithelial cells against necrosis and apoptosis induced by more hydrophobic secondary bile acids like deoxycholate (DCA). This enzyme is also able to catalyze the reverse reaction, i.e. the oxidation of the 7beta-hydroxy group of UDCA to 7-oxo-LCA. To a lesser extent, is also active on the taurine- and glycine-conjugates of ursodeoxycholate. It is specific for NADPH/NADP(+) as the electron acceptor/donor since it is not active with NADH/NAD(+). In the presence of NADPH, 7beta-HSDH can also reduce dehydrocholate. And is also able to oxidize ursocholate. The protein is 7beta-hydroxysteroid dehydrogenase of Collinsella aerofaciens (strain ATCC 25986 / DSM 3979 / JCM 10188 / KCTC 3647 / NCTC 11838 / VPI 1003).